The chain runs to 340 residues: 7,8-didemethyl-8-hydroxy-5-deazariboflavin synthase (340 aa).

One can recognise a Radical SAM core domain in the interval 25–256 (ATYSPAYTIV…SDITIQIPPN (232 aa)). 3 residues coordinate [4Fe-4S] cluster: C39, C43, and C46.

The protein belongs to the radical SAM superfamily. CofG family. As to quaternary structure, consists of two subunits, CofG and CofH. It depends on [4Fe-4S] cluster as a cofactor.

The enzyme catalyses 5-amino-5-(4-hydroxybenzyl)-6-(D-ribitylimino)-5,6-dihydrouracil + S-adenosyl-L-methionine = 7,8-didemethyl-8-hydroxy-5-deazariboflavin + 5'-deoxyadenosine + L-methionine + NH4(+) + H(+). It participates in cofactor biosynthesis; coenzyme F0 biosynthesis. Its function is as follows. Catalyzes the radical-mediated synthesis of 7,8-didemethyl-8-hydroxy-5-deazariboflavin from 5-amino-5-(4-hydroxybenzyl)-6-(D-ribitylimino)-5,6-dihydrouracil. This is 7,8-didemethyl-8-hydroxy-5-deazariboflavin synthase from Trichormus variabilis (strain ATCC 29413 / PCC 7937) (Anabaena variabilis).